A 274-amino-acid polypeptide reads, in one-letter code: NH(3)-dependent NAD(+) synthetase (274 aa).

46–53 (GISGGQDS) serves as a coordination point for ATP. Asp-52 provides a ligand contact to Mg(2+). A deamido-NAD(+)-binding site is contributed by Arg-140. Thr-160 provides a ligand contact to ATP. A Mg(2+)-binding site is contributed by Glu-165. Deamido-NAD(+) contacts are provided by Lys-173 and Asp-180. The ATP site is built by Lys-189 and Thr-211. 260–261 (HK) lines the deamido-NAD(+) pocket.

This sequence belongs to the NAD synthetase family. In terms of assembly, homodimer.

It catalyses the reaction deamido-NAD(+) + NH4(+) + ATP = AMP + diphosphate + NAD(+) + H(+). Its pathway is cofactor biosynthesis; NAD(+) biosynthesis; NAD(+) from deamido-NAD(+) (ammonia route): step 1/1. Its function is as follows. Catalyzes the ATP-dependent amidation of deamido-NAD to form NAD. Uses ammonia as a nitrogen source. The sequence is that of NH(3)-dependent NAD(+) synthetase from Nocardia farcinica (strain IFM 10152).